The chain runs to 350 residues: Phenylalanine--tRNA ligase alpha subunit (350 aa).

Glutamate 271 is a Mg(2+) binding site.

The protein belongs to the class-II aminoacyl-tRNA synthetase family. Phe-tRNA synthetase alpha subunit type 1 subfamily. Tetramer of two alpha and two beta subunits. The cofactor is Mg(2+).

Its subcellular location is the cytoplasm. It catalyses the reaction tRNA(Phe) + L-phenylalanine + ATP = L-phenylalanyl-tRNA(Phe) + AMP + diphosphate + H(+). The polypeptide is Phenylalanine--tRNA ligase alpha subunit (Verminephrobacter eiseniae (strain EF01-2)).